A 438-amino-acid chain; its full sequence is uncharacterized protein (438 aa).

This is an uncharacterized protein from Encephalitozoon cuniculi (strain GB-M1) (Microsporidian parasite).